A 352-amino-acid polypeptide reads, in one-letter code: Fructose-1,6-bisphosphatase class 1 (352 aa).

4 residues coordinate Mg(2+): Glu111, Asp133, Ile135, and Asp136. Substrate is bound by residues 136–139 (DGSS), Asn228, Tyr256, and Lys286. Glu292 serves as a coordination point for Mg(2+).

Belongs to the FBPase class 1 family. As to quaternary structure, homotetramer. Mg(2+) serves as cofactor.

It localises to the cytoplasm. It catalyses the reaction beta-D-fructose 1,6-bisphosphate + H2O = beta-D-fructose 6-phosphate + phosphate. The protein operates within carbohydrate biosynthesis; Calvin cycle. The polypeptide is Fructose-1,6-bisphosphatase class 1 (Crocosphaera subtropica (strain ATCC 51142 / BH68) (Cyanothece sp. (strain ATCC 51142))).